Consider the following 143-residue polypeptide: Ribonuclease HI (143 aa).

The region spanning 1-136 is the RNase H type-1 domain; sequence MQEIEIFCDG…CDSLAKLEAQ (136 aa). The Mg(2+) site is built by D9, E47, D69, and D128.

The protein belongs to the RNase H family. In terms of assembly, monomer. Requires Mg(2+) as cofactor.

The protein resides in the cytoplasm. The catalysed reaction is Endonucleolytic cleavage to 5'-phosphomonoester.. Its function is as follows. Endonuclease that specifically degrades the RNA of RNA-DNA hybrids. In Helicobacter pylori (strain ATCC 700392 / 26695) (Campylobacter pylori), this protein is Ribonuclease HI (rnhA).